The sequence spans 242 residues: MKATLVLGSLIVGAVSAYKATTTRYYDGQEGACGCGSSSGAFPWQLGIGNGVYTAAGSQALFDTAGASWCGAGCGKCYQLTSTGQAPCSSCGTGGAAGQSIIVMVTNLCPNNGNAQWCPVVGGTNQYGYSYHFDIMAQNEIFGDNVVVDFEPIACPGQAASDWGTCLCVGQQETDPTPVLGNDTGSTPPGSSPPATSSSPPSGGGQQTLYGQCGGAGWTGPTTCQAPGTCKVQNQWYSQCLP.

An N-terminal signal peptide occupies residues Met1–Ala17. The tract at residues Tyr18 to Asn182 is catalytic. Residue Asp27 is the Nucleophile of the active site. The active-site Proton donor is Asp134. Positions Thr177–Gln206 are disordered. Asn182 is a glycosylation site (N-linked (GlcNAc...) asparagine). Low complexity predominate over residues Thr184–Pro201. Residues Gly205–Leu241 enclose the CBM1 domain. Intrachain disulfides connect Cys213-Cys230 and Cys224-Cys240.

The protein belongs to the glycosyl hydrolase 45 (cellulase K) family.

The enzyme catalyses Endohydrolysis of (1-&gt;4)-beta-D-glucosidic linkages in cellulose, lichenin and cereal beta-D-glucans.. In Hypocrea jecorina (Trichoderma reesei), this protein is Endoglucanase-5 (egl5).